Here is a 459-residue protein sequence, read N- to C-terminus: Protein king tubby (459 aa).

Positions 114–205 (HELEDEESSP…SNGAGGESEG (92 aa)) are disordered. Residues 123–155 (PVTVIEQQQTAPHSANSTHSQRPSTTRQPSFND) show a composition bias toward polar residues. Phosphoserine is present on Ser152.

It belongs to the TUB family.

The protein resides in the cytoplasm. The protein localises to the nucleus. Its subcellular location is the cell projection. It is found in the cilium membrane. It localises to the rhabdomere. In Drosophila persimilis (Fruit fly), this protein is Protein king tubby.